Here is a 749-residue protein sequence, read N- to C-terminus: 5-methyltetrahydropteroyltriglutamate--homocysteine methyltransferase (749 aa).

Residues arginine 15 to lysine 18 and lysine 114 contribute to the 5-methyltetrahydropteroyltri-L-glutamate site. Residues isoleucine 425–serine 427 and glutamate 478 each bind L-homocysteine. Residues isoleucine 425–serine 427 and glutamate 478 each bind L-methionine. Residue tryptophan 555 participates in 5-methyltetrahydropteroyltri-L-glutamate binding. Aspartate 593 serves as a coordination point for L-homocysteine. Aspartate 593 provides a ligand contact to L-methionine. Glutamate 599 lines the 5-methyltetrahydropteroyltri-L-glutamate pocket. Positions 636, 638, and 660 each coordinate Zn(2+). Catalysis depends on histidine 689, which acts as the Proton donor. A Zn(2+)-binding site is contributed by cysteine 721.

The protein belongs to the vitamin-B12 independent methionine synthase family. The cofactor is Zn(2+).

The catalysed reaction is 5-methyltetrahydropteroyltri-L-glutamate + L-homocysteine = tetrahydropteroyltri-L-glutamate + L-methionine. It functions in the pathway amino-acid biosynthesis; L-methionine biosynthesis via de novo pathway; L-methionine from L-homocysteine (MetE route): step 1/1. In terms of biological role, catalyzes the transfer of a methyl group from 5-methyltetrahydrofolate to homocysteine resulting in methionine formation. This Streptococcus suis (strain 05ZYH33) protein is 5-methyltetrahydropteroyltriglutamate--homocysteine methyltransferase.